Here is a 182-residue protein sequence, read N- to C-terminus: Adenine phosphoribosyltransferase (182 aa).

This sequence belongs to the purine/pyrimidine phosphoribosyltransferase family. As to quaternary structure, homodimer.

The protein localises to the cytoplasm. The catalysed reaction is AMP + diphosphate = 5-phospho-alpha-D-ribose 1-diphosphate + adenine. It functions in the pathway purine metabolism; AMP biosynthesis via salvage pathway; AMP from adenine: step 1/1. Its function is as follows. Catalyzes a salvage reaction resulting in the formation of AMP, that is energically less costly than de novo synthesis. This chain is Adenine phosphoribosyltransferase, found in Campylobacter fetus subsp. fetus (strain 82-40).